Reading from the N-terminus, the 420-residue chain is MATKTELSPTARESKNAQDMQVDETLIPRKVPSLCSARYGIALVLHFCNFTTIAQNVIMNITMVAMVNSTSPQSQLNDSSEVLPVDSFGGLSKAPKSLPAKSSILGGQFAIWEKWGPPQERSRLCSIALSGMLLGCFTAILIGGFISETLGWPFVFYIFGGVGCVCCLLWFVVIYDDPVSYPWISTSEKEYIISSLKQQVGSSKQPLPIKAMLRSLPIWSICLGCFSHQWLVSTMVVYIPTYISSVYHVNIRDNGLLSALPFIVAWVIGMVGGYLADFLLTKKFRLITVRKIATILGSLPSSALIVSLPYLNSGYITATALLTLSCGLSTLCQSGIYINVLDIAPRYSSFLMGASRGFSSIAPVIVPTVSGFLLSQDPEFGWRNVFFLLFAVNLLGLLFYLIFGEADVQEWAKERKLTRL.

The disordered stretch occupies residues 1-21 (MATKTELSPTARESKNAQDMQ). N-linked (GlcNAc...) asparagine glycans are attached at residues N49, N60, N68, and N77. Helical transmembrane passes span 126-146 (SIAL…GGFI), 154-174 (FVFY…FVVI), 218-238 (IWSI…MVVY), 256-276 (LLSA…GYLA), 292-314 (IATI…LNSG), 319-341 (TALL…INVL), 357-377 (GFSS…LSQD), and 385-405 (VFFL…IFGE).

This sequence belongs to the major facilitator superfamily. Sodium/anion cotransporter family. In terms of tissue distribution, expressed in the liver and kidney. It is detected in proximal tubules in renal cortex as well as some tubules and glomeruli, with highest expression at the apical side of proximal tubules (at protein level).

It localises to the endoplasmic reticulum membrane. Its subcellular location is the cell membrane. It catalyses the reaction urate(in) + Na(+)(out) = urate(out) + Na(+)(in). Transports organic anions in a voltage-driven, multispecific, manner, on the apical side of renal proximal tubule. In particular, participates in the secretion of urate from the cell into the lumen. Urate is the end product of purine metabolism. May have roles in the metabolism and secretion of estrone sulfate, estradiol-17-beta-glucuronide, ochratoxin A, as wells as drugs such as bumetanide. In Homo sapiens (Human), this protein is Sodium-dependent phosphate transport protein 4 (SLC17A3).